We begin with the raw amino-acid sequence, 123 residues long: Small ribosomal subunit protein uS12 (123 aa).

The disordered stretch occupies residues 9 to 28; it reads RNGRKRATKKTTTPALKGAP. Over residues 18-27 the composition is skewed to low complexity; it reads KTTTPALKGA. Residue aspartate 89 is modified to 3-methylthioaspartic acid.

It belongs to the universal ribosomal protein uS12 family. Part of the 30S ribosomal subunit. Contacts proteins S8 and S17. May interact with IF1 in the 30S initiation complex.

In terms of biological role, with S4 and S5 plays an important role in translational accuracy. Interacts with and stabilizes bases of the 16S rRNA that are involved in tRNA selection in the A site and with the mRNA backbone. Located at the interface of the 30S and 50S subunits, it traverses the body of the 30S subunit contacting proteins on the other side and probably holding the rRNA structure together. The combined cluster of proteins S8, S12 and S17 appears to hold together the shoulder and platform of the 30S subunit. This is Small ribosomal subunit protein uS12 from Desulfosudis oleivorans (strain DSM 6200 / JCM 39069 / Hxd3) (Desulfococcus oleovorans).